The chain runs to 427 residues: D-inositol 3-phosphate glycosyltransferase 2 (427 aa).

H14 is a binding site for 1D-myo-inositol 3-phosphate. Residues 20 to 21 and G28 contribute to the UDP-N-acetyl-alpha-D-glucosamine site; that span reads QP. Residues 25–30, K83, Y116, T140, and R160 each bind 1D-myo-inositol 3-phosphate; that span reads DAGGMN. Residues R234, K239, and V300 each coordinate UDP-N-acetyl-alpha-D-glucosamine. Mg(2+) contacts are provided by Y309, R310, and A312. UDP-N-acetyl-alpha-D-glucosamine-binding residues include E322 and E330. T336 contributes to the Mg(2+) binding site.

Belongs to the glycosyltransferase group 1 family. MshA subfamily. Homodimer.

The enzyme catalyses 1D-myo-inositol 3-phosphate + UDP-N-acetyl-alpha-D-glucosamine = 1D-myo-inositol 2-acetamido-2-deoxy-alpha-D-glucopyranoside 3-phosphate + UDP + H(+). In terms of biological role, catalyzes the transfer of a N-acetyl-glucosamine moiety to 1D-myo-inositol 3-phosphate to produce 1D-myo-inositol 2-acetamido-2-deoxy-glucopyranoside 3-phosphate in the mycothiol biosynthesis pathway. The sequence is that of D-inositol 3-phosphate glycosyltransferase 2 from Catenulispora acidiphila (strain DSM 44928 / JCM 14897 / NBRC 102108 / NRRL B-24433 / ID139908).